A 405-amino-acid chain; its full sequence is MRFFPILCLVLFISHGVASRRHSHSKKKKAKESSVGAVGPPSSKDFAFRLYRALVSESPGQNVFFSPLSVSMSLGMLSLGAGLKTKTQILDGLGLSLQQGQEDKLHKGFQQLLQRFRQPSDGLQLSLGSALFKDPAVHIRDDFLSAMKTLYMSDTFSTNFGNPEIAKKQINNYVAKQTKGKIVDFIKDLDSTHVMIVVNYIFFKAKWQTAFSETNTHKMDFHVTPKRTTQVPMMNREDGYSYYLDQNISCTVVGIPYQGNAIALFILPSEGKMKQVEDGLDERTLRNWLKMFTKRRLDLYLPKFSIEATYKLENVLPKLGIQDVFTTHADLSGITDHTNIKLSEMVHKSMMEVEESGTTAAAITGAIFTFRSARPSSLKIEFTRPFLLTLMEDSHILFVGKVTRP.

The N-terminal stretch at methionine 1–serine 19 is a signal peptide. A propeptide spans arginine 20–histidine 24 (removed in mature form). Residue asparagine 247 is glycosylated (N-linked (GlcNAc...) asparagine).

The protein belongs to the serpin family. Forms protease inhibiting heterodimers in extracellular body fluids with serine proteases such as activated protein C/coagulation factor V/F5, acrosin/ACR, chymotrypsinogen B/CTRB1, prothrombin/F2, factor Xa/F10, factor XI/F11, kallikrein/KLKB1, tissue kallikrein, trypsin/PRSS1, prostate specific antigen/KLK3, tissue plasminogen activator/PLAT and urinary plasminogen activator/PLAU. Forms membrane-anchored serine proteases inhibiting heterodimers with TMPRSS7 and TMPRSS11E. Interacts with SEMG2. N-glycosylated; glycans consist of a mixture of sialylated bi- (including sialyl-Lewis X epitopes), tri- and tetra-antennary complex-type chains; affects the maximal heparin- and thrombomodulin-enhanced rates of thrombin inhibition. O-glycosylated; further modified with 2 sialic acid residues. Proteolytically cleaved at the N-terminus; inhibits slightly the heparin- and thrombomodulin-enhanced rates of thrombin inhibition. Post-translationally, proteolytically cleaved. Inhibition of proteases is accompanied by formation of a stable enzyme-inhibitor complex and by degradation of the serpin to lower molecular weight derivatives. In terms of tissue distribution, not detected in blood plasma (at protein level). Expressed in testis, epididymis, seminal vesicles, prostate and ovaries.

It is found in the secreted. The protein resides in the extracellular space. With respect to regulation, its inhibitory activity is greatly enhanced in the presence of glycosaminoglycans, heparin, thrombomodulin and phospholipids vesicles. Functionally, heparin-dependent serine protease inhibitor acting in body fluids and secretions. Inactivates serine proteases by binding irreversibly to their serine activation site. Involved in the regulation of intravascular and extravascular proteolytic activities. Plays hemostatic roles in the blood plasma. Acts as a procoagulant and pro-inflammatory factor by inhibiting the anticoagulant activated protein C factor as well as the generation of activated protein C factor by the thrombin/thrombomodulin complex. Acts as an anticoagulant factor by inhibiting blood coagulation factors like prothrombin, factor XI, factor Xa, plasma kallikrein and fibrinolytic enzymes such as tissue- and urinary-type plasminogen activators. In seminal plasma, inactivates several serine proteases implicated in the reproductive system. Inhibits the serpin acrosin; indirectly protects component of the male genital tract from being degraded by excessive released acrosin. Inhibits tissue- and urinary-type plasminogen activator, prostate-specific antigen and kallikrein activities; has a control on the sperm motility and fertilization. Inhibits the activated protein C-catalyzed degradation of SEMG1 and SEMG2; regulates the degradation of semenogelin during the process of transfer of spermatozoa from the male reproductive tract into the female tract. In urine, inhibits urinary-type plasminogen activator and kallikrein activities. Inactivates membrane-anchored serine proteases activities such as MPRSS7 and TMPRSS11E. Inhibits urinary-type plasminogen activator-dependent tumor cell invasion and metastasis. May also play a non-inhibitory role in seminal plasma and urine as a hydrophobic hormone carrier by its binding to retinoic acid. This Mus musculus (Mouse) protein is Plasma serine protease inhibitor (Serpina5).